The following is a 157-amino-acid chain: MPLYEHVFLARQDASTQQVEELTTQITGVIEGLGGKVVKMEAWGVRSLTYRMNKNRKAHFVLLNIDGPSAVVAEVERQERINEDVIRYLTVRVDEHEEGPSAMMRKADRDRDRDERGGGGFRGDREGGFRGDREGGGFRGDRGPRRPRDDAPAATEE.

The span at 96–151 (HEEGPSAMMRKADRDRDRDERGGGGFRGDREGGFRGDREGGGFRGDRGPRRPRDDA) shows a compositional bias: basic and acidic residues. The tract at residues 96–157 (HEEGPSAMMR…RDDAPAATEE (62 aa)) is disordered.

The protein belongs to the bacterial ribosomal protein bS6 family.

Functionally, binds together with bS18 to 16S ribosomal RNA. The chain is Small ribosomal subunit protein bS6 from Rhodopseudomonas palustris (strain BisA53).